A 661-amino-acid polypeptide reads, in one-letter code: Pentatricopeptide repeat-containing protein At5g66631 (661 aa).

9 PPR repeats span residues 139–173 (VHFSFMNLLNLYATAGDFDSVLKTWDEYRCSGEEK), 176–210 (CTESYNIVMQVYMTLGKDSEAVQTFDQIINEGGIP), 211–245 (NSRTFTIMIEHLVKLGNLDAAMKIFETLPLMRITR), 246–280 (TLKHYSVLVEAFVDAQRFDEVKTLIAEMKSDGKFP), 410–444 (DAYTIERMMAMLARNGQVELVDKLISKVRIEGIKL), 445–475 (PFSTIRLIIDLYGISKKPEAAIKVFNEDRTL), 484–518 (LMLLYSSLLRTLTKCKRNAEALETLEDMMLTGVSP), 519–553 (DIQTFSGLMYHFALQGEIQTVERLFSMVRQIGLEP), and 554–588 (DPYMLKLLVQAYCRCERSVLAYRVFQDMKDSNLMP).

Belongs to the PPR family. P subfamily.

The chain is Pentatricopeptide repeat-containing protein At5g66631 from Arabidopsis thaliana (Mouse-ear cress).